We begin with the raw amino-acid sequence, 589 residues long: tRNA (guanine(26)-N(2))-dimethyltransferase 2 (589 aa).

The 457-residue stretch at 9–465 folds into the Trm1 methyltransferase domain; sequence TVIKEGEAEI…APMEVIWDIM (457 aa). Residue Arg-36 coordinates S-adenosyl-L-methionine. The disordered stretch occupies residues 51–122; it reads KQEHEAKSSK…RFAPREPKPP (72 aa). 2 stretches are compositionally biased toward basic and acidic residues: residues 68–81 and 106–122; these read VIEK…KEET and DPAK…PKPP. S-adenosyl-L-methionine is bound by residues Arg-134, Asp-152, and Val-185. 4 residues coordinate Zn(2+): Cys-315, Cys-318, Cys-350, and Cys-353. The segment at 550 to 589 is disordered; the sequence is LSQHHEELKEEDEEAEPEDNVQDKVDPKRQKTATDNITST. A compositionally biased stretch (acidic residues) spans 558–569; it reads KEEDEEAEPEDN.

It belongs to the class I-like SAM-binding methyltransferase superfamily. Trm1 family.

It catalyses the reaction guanosine(26) in tRNA + 2 S-adenosyl-L-methionine = N(2)-dimethylguanosine(26) in tRNA + 2 S-adenosyl-L-homocysteine + 2 H(+). Functionally, dimethylates a single guanine residue at position 26 of most tRNAs using S-adenosyl-L-methionine as donor of the methyl groups. This Arabidopsis thaliana (Mouse-ear cress) protein is tRNA (guanine(26)-N(2))-dimethyltransferase 2.